We begin with the raw amino-acid sequence, 301 residues long: Ribosomal RNA small subunit methyltransferase H (301 aa).

S-adenosyl-L-methionine contacts are provided by residues glycine 35–histidine 37, aspartate 55, phenylalanine 84, aspartate 105, and glutamine 112.

It belongs to the methyltransferase superfamily. RsmH family.

It is found in the cytoplasm. It carries out the reaction cytidine(1402) in 16S rRNA + S-adenosyl-L-methionine = N(4)-methylcytidine(1402) in 16S rRNA + S-adenosyl-L-homocysteine + H(+). In terms of biological role, specifically methylates the N4 position of cytidine in position 1402 (C1402) of 16S rRNA. The protein is Ribosomal RNA small subunit methyltransferase H of Chloroflexus aggregans (strain MD-66 / DSM 9485).